The sequence spans 522 residues: Hydroxymethylglutaryl-CoA synthase, cytoplasmic (522 aa).

2 residues coordinate (3S)-3-hydroxy-3-methylglutaryl-CoA: Asp-43 and Ala-44. Glu-95 (proton donor/acceptor) is an active-site residue. 8 residues coordinate (3S)-3-hydroxy-3-methylglutaryl-CoA: Cys-129, Asn-167, Thr-171, Ser-221, His-264, Lys-273, Asn-344, and Ser-378. The active-site Acyl-thioester intermediate is Cys-129. His-264 serves as the catalytic Proton donor/acceptor.

This sequence belongs to the thiolase-like superfamily. HMG-CoA synthase family. In terms of assembly, homodimer.

The protein localises to the cytoplasm. The enzyme catalyses acetoacetyl-CoA + acetyl-CoA + H2O = (3S)-3-hydroxy-3-methylglutaryl-CoA + CoA + H(+). Its pathway is metabolic intermediate biosynthesis; (R)-mevalonate biosynthesis; (R)-mevalonate from acetyl-CoA: step 2/3. In terms of biological role, catalyzes the condensation of acetyl-CoA with acetoacetyl-CoA to form HMG-CoA, which is converted by HMG-CoA reductase (HMGCR) into mevalonate, a precursor for cholesterol synthesis. The sequence is that of Hydroxymethylglutaryl-CoA synthase, cytoplasmic (HMGCS1) from Gallus gallus (Chicken).